The chain runs to 1391 residues: DNA-directed RNA polymerase subunit beta' (1391 aa).

Zn(2+) is bound by residues Cys72, Cys74, Cys87, and Cys90. The Mg(2+) site is built by Asp462, Asp464, and Asp466. The Zn(2+) site is built by Cys816, Cys890, Cys897, and Cys900.

Belongs to the RNA polymerase beta' chain family. As to quaternary structure, the RNAP catalytic core consists of 2 alpha, 1 beta, 1 beta' and 1 omega subunit. When a sigma factor is associated with the core the holoenzyme is formed, which can initiate transcription. Mg(2+) serves as cofactor. Requires Zn(2+) as cofactor.

It carries out the reaction RNA(n) + a ribonucleoside 5'-triphosphate = RNA(n+1) + diphosphate. Functionally, DNA-dependent RNA polymerase catalyzes the transcription of DNA into RNA using the four ribonucleoside triphosphates as substrates. This Neisseria meningitidis serogroup B (strain ATCC BAA-335 / MC58) protein is DNA-directed RNA polymerase subunit beta'.